Reading from the N-terminus, the 321-residue chain is CRISPR-associated aCascade subunit Cas7/Csa2 2 (321 aa).

It belongs to the CRISPR-associated protein Cas7/Cst2/DevR family. Subtype I-a/Apern subfamily. Part of the aCascade ribonucleoprotein complex, minimally composed of Csa2 and Cas5a, which binds crRNA. Other possible components of aCascade in strain P1 are Cas6b (SSO1437) and Csa5 (SSO1443), while SSO1399, Cas5b (SSO1400) and SSO1401 have sometimes been seen weakly associated. Csa2 is probably the major RNA-binding subunit. The Csa2-Cas5a-crRNA complex also binds target DNA homologous to crRNA, probably forming an R-loop. Purified aCascade forms a filament about 6 nm in width.

Functionally, CRISPR (clustered regularly interspaced short palindromic repeat) is an adaptive immune system that provides protection against mobile genetic elements (viruses, transposable elements and conjugative plasmids). CRISPR clusters contain spacers, sequences complementary to antecedent mobile elements, and target invading nucleic acids. CRISPR clusters are transcribed and processed into CRISPR RNA (crRNA). The protein is CRISPR-associated aCascade subunit Cas7/Csa2 2 (csa2b) of Saccharolobus solfataricus (strain ATCC 35092 / DSM 1617 / JCM 11322 / P2) (Sulfolobus solfataricus).